Here is a 476-residue protein sequence, read N- to C-terminus: tRNA (cytosine(72)-C(5))-methyltransferase NSUN6 (476 aa).

The 93-residue stretch at 111 to 203 (QGEVIVGAQC…IGIRMTEPIY (93 aa)) folds into the PUA domain. Residues 242 to 248 (CAAPGGK), aspartate 266, aspartate 293, and aspartate 323 contribute to the S-adenosyl-L-methionine site. Cysteine 373 serves as the catalytic Nucleophile. Residue lysine 419 is modified to N6-acetyllysine.

This sequence belongs to the class I-like SAM-binding methyltransferase superfamily. RsmB/NOP family.

It localises to the cytoplasm. The enzyme catalyses cytidine(72) in tRNA(Thr) + S-adenosyl-L-methionine = 5-methylcytidine(72) in tRNA(Thr) + S-adenosyl-L-homocysteine + H(+). It carries out the reaction cytidine(72) in tRNA(Cys) + S-adenosyl-L-methionine = 5-methylcytidine(72) in tRNA(Cys) + S-adenosyl-L-homocysteine + H(+). S-adenosyl-L-methionine-dependent methyltransferase that specifically methylates the C5 position of cytosine 72 in tRNA(Thr)(TGT) and tRNA(Cys)(GCA). In vitro also methylates tRNA(Thr)(AGT). Methylation requires, in the acceptor stem region, the presence of the 3'-CCA terminus, the target site C72, the discriminator base U73, and the second and third base pairs (2:71 and 3:70) in the tRNA substrates. The polypeptide is tRNA (cytosine(72)-C(5))-methyltransferase NSUN6 (Mus musculus (Mouse)).